Consider the following 317-residue polypeptide: DNA-directed RNA polymerase subunit alpha (317 aa).

The tract at residues M1–N234 is alpha N-terminal domain (alpha-NTD). Positions D250 to S317 are alpha C-terminal domain (alpha-CTD).

This sequence belongs to the RNA polymerase alpha chain family. Homodimer. The RNAP catalytic core consists of 2 alpha, 1 beta, 1 beta' and 1 omega subunit. When a sigma factor is associated with the core the holoenzyme is formed, which can initiate transcription.

The catalysed reaction is RNA(n) + a ribonucleoside 5'-triphosphate = RNA(n+1) + diphosphate. In terms of biological role, DNA-dependent RNA polymerase catalyzes the transcription of DNA into RNA using the four ribonucleoside triphosphates as substrates. The chain is DNA-directed RNA polymerase subunit alpha from Mycoplasma mycoides subsp. mycoides SC (strain CCUG 32753 / NCTC 10114 / PG1).